We begin with the raw amino-acid sequence, 224 residues long: Transcription factor MYB1 (224 aa).

HTH myb-type domains follow at residues 10–66 and 67–117; these read LGRV…KPSI and KRGH…YKKH. 2 consecutive DNA-binding regions (H-T-H motif) follow at residues 38 to 62 and 90 to 113; these read WKRVPERAGLNRCRKSCRWRWLNYL and WSLIAAKLPGRTINDVKNYCNTHL.

The protein localises to the nucleus. Activates DODA1 and CYP76AD1 in the betalain red pigment pathway. The polypeptide is Transcription factor MYB1 (Beta vulgaris (Sugar beet)).